A 185-amino-acid polypeptide reads, in one-letter code: Meiotically up-regulated gene 5 protein (185 aa).

The protein localises to the cytoplasm. Required for correct meiotic chromosome segregation. This Schizosaccharomyces pombe (strain 972 / ATCC 24843) (Fission yeast) protein is Meiotically up-regulated gene 5 protein (mug5).